The following is a 392-amino-acid chain: Putative transactivator/viroplasmin protein (392 aa).

A coiled-coil region spans residues 1 to 88 (MEDMMKQILE…NVEEQYQWKN (88 aa)). The segment at 358-392 (EIEKEEPGEEKNLEDVSTDDNNEKKKIRSVIVKET) is disordered.

This sequence belongs to the caulimoviridae viroplasmin family.

Its subcellular location is the host cytoplasm. Enhances the translation of downstream ORFs on polycistronic mRNAs derived from cassava vein mosaic virus. The chain is Putative transactivator/viroplasmin protein from Cassava vein mosaic virus (CsVMV).